The primary structure comprises 177 residues: Large ribosomal subunit protein uL5 (177 aa).

Belongs to the universal ribosomal protein uL5 family. Part of the 50S ribosomal subunit; part of the 5S rRNA/L5/L18/L25 subcomplex. Contacts the 5S rRNA and the P site tRNA. Forms a bridge to the 30S subunit in the 70S ribosome.

Functionally, this is one of the proteins that bind and probably mediate the attachment of the 5S RNA into the large ribosomal subunit, where it forms part of the central protuberance. In the 70S ribosome it contacts protein S13 of the 30S subunit (bridge B1b), connecting the 2 subunits; this bridge is implicated in subunit movement. Contacts the P site tRNA; the 5S rRNA and some of its associated proteins might help stabilize positioning of ribosome-bound tRNAs. The sequence is that of Large ribosomal subunit protein uL5 from Ehrlichia chaffeensis (strain ATCC CRL-10679 / Arkansas).